The sequence spans 603 residues: Elongation factor 4 (603 aa).

The tr-type G domain occupies 5–187; the sequence is RHIRNFCIIA…AVVNFVPPPK (183 aa). Residues 17–22 and 134–137 each bind GTP; these read DHGKST and NKID.

The protein belongs to the TRAFAC class translation factor GTPase superfamily. Classic translation factor GTPase family. LepA subfamily.

Its subcellular location is the cell membrane. The catalysed reaction is GTP + H2O = GDP + phosphate + H(+). Required for accurate and efficient protein synthesis under certain stress conditions. May act as a fidelity factor of the translation reaction, by catalyzing a one-codon backward translocation of tRNAs on improperly translocated ribosomes. Back-translocation proceeds from a post-translocation (POST) complex to a pre-translocation (PRE) complex, thus giving elongation factor G a second chance to translocate the tRNAs correctly. Binds to ribosomes in a GTP-dependent manner. The sequence is that of Elongation factor 4 from Symbiobacterium thermophilum (strain DSM 24528 / JCM 14929 / IAM 14863 / T).